The primary structure comprises 455 residues: Probable galactarate/D-glucarate transporter GudP (455 aa).

Transmembrane regions (helical) follow at residues 19–39 (WFIVFMLFLVTSINYADRATL), 59–79 (YVFSAFGWAYVIGQLPGGWLL), 87–107 (IIALSIFFWSFFTLLQGAIGF), 108–128 (FSAGTAIILLFALRFLVGLSE), 153–173 (AFFNSAQYFAIVIFSPLMGWL), 177–197 (FGWHSVFVVMGIAGILLAVIW), 253–273 (IGVYIAQYCITTLTYFFLTWF), 289–309 (GFVASLPALCGFAGGVLGGIV), 320–340 (LTFARKVPIIAGMLLSCSMIV), 348–368 (WLVVVIMSLAFFGKGFGALGW), 386–406 (LFNTFGNIASITTPIIIGYIV), and 414–434 (GALVFVGANAIAAILSYLLLV).

The protein belongs to the major facilitator superfamily. Phthalate permease family.

The protein resides in the cell membrane. It carries out the reaction galactarate(in) + H(+)(in) = galactarate(out) + H(+)(out). It catalyses the reaction D-glucarate(in) + H(+)(in) = D-glucarate(out) + H(+)(out). In terms of biological role, probably involved in the uptake of galactarate and/or D-glucarate. The polypeptide is Probable galactarate/D-glucarate transporter GudP (Bacillus subtilis (strain 168)).